The chain runs to 250 residues: Osmotin-like protein OSML15 (250 aa).

Positions 1–21 (MSHLTTCLVFFLLAFVTYTNA) are cleaved as a signal peptide. Disulfide bonds link C31–C226, C73–C83, C88–C94, C142–C214, C147–C197, C155–C165, C169–C178, and C179–C184.

It belongs to the thaumatin family.

In Solanum commersonii (Commerson's wild potato), this protein is Osmotin-like protein OSML15.